A 48-amino-acid chain; its full sequence is Ambineela (48 aa).

In terms of assembly, monomer. Post-translationally, the blue color is due to an unidentified non-fluorescent cofactor, covalently bound to it.

Its function is as follows. Ambineela is a blue protein and has a pI of 8.7. The chain is Ambineela from Acidianus ambivalens (Desulfurolobus ambivalens).